We begin with the raw amino-acid sequence, 544 residues long: Chaperonin GroEL 2 (544 aa).

ATP-binding positions include 29 to 32 (TLGP), 86 to 90 (DGTTT), G413, and D495. Residues 525–544 (PEPKSNKPAGGGGGVDDYDY) are disordered. Over residues 533–544 (AGGGGGVDDYDY) the composition is skewed to gly residues.

It belongs to the chaperonin (HSP60) family. In terms of assembly, forms a cylinder of 14 subunits composed of two heptameric rings stacked back-to-back. Interacts with the co-chaperonin GroES.

It is found in the cytoplasm. The catalysed reaction is ATP + H2O + a folded polypeptide = ADP + phosphate + an unfolded polypeptide.. Together with its co-chaperonin GroES, plays an essential role in assisting protein folding. The GroEL-GroES system forms a nano-cage that allows encapsulation of the non-native substrate proteins and provides a physical environment optimized to promote and accelerate protein folding. The polypeptide is Chaperonin GroEL 2 (Synechococcus sp. (strain JA-3-3Ab) (Cyanobacteria bacterium Yellowstone A-Prime)).